We begin with the raw amino-acid sequence, 838 residues long: MEQRASLDSEESESPPQENSCLDPPDRDPNCKPPPVKPHIFTTRSRTRLFGKGDSEEASPLDCPYEEGGLASCPIITVSSVLTIQRPGDGPASVRPSSQDSVSAGEKPPRLYDRRSIFDAVAQSNCQELESLLPFLQRSKKRLTDSEFKDPETGKTCLLKAMLNLHNGQNDTIALLLDVARKTDSLKQFVNASYTDSYYKGQTALHIAIERRNMTLVTLLVENGADVQAAANGDFFKKTKGRPGFYFGELPLSLAACTNQLAIVKFLLQNSWQPADISARDSVGNTVLHALVEVADNTVDNTKFVTSMYNEILILGAKLHPTLKLEEITNRKGLTPLALAASSGKIGVLAYILQREIHEPECRHLSRKFTEWAYGPVHSSLYDLSCIDTCEKNSVLEVIAYSSSETPNRHDMLLVEPLNRLLQDKWDRFVKRIFYFNFFVYCLYMIIFTAAAYYRPVEGLPPYKLKNTVGDYFRVTGEILSVSGGVYFFFRGIQYFLQRRPSLKSLFVDSYSEILFFVQSLFMLVSVVLYFSQRKEYVASMVFSLAMGWTNMLYYTRGFQQMGIYAVMIEKMILRDLCRFMFVYLVFLFGFSTAVVTLIEDGKNNSLPMESTPHKCRGSACKPGNSYNSLYSTCLELFKFTIGMGDLEFTENYDFKAVFIILLLAYVILTYILLLNMLIALMGETVNKIAQESKNIWKLQRAITILDTEKSFLKCMRKAFRSGKLLQVGFTPDGKDDYRWCFRVDEVNWTTWNTNVGIINEDPGNCEGVKRTLSFSLRSGRVSGRNWKNFALVPLLRDASTRDRHATQQEEVQLKHYTGSLKPEDAEVFKDSMVPGEK.

2 disordered regions span residues 1-63 (MEQR…PLDC) and 86-109 (RPGD…EKPP). At 1–432 (MEQRASLDSE…QDKWDRFVKR (432 aa)) the chain is on the cytoplasmic side. The ANK 1 repeat unit spans residues 110 to 138 (RLYDRRSIFDAVAQSNCQELESLLPFLQR). R115 contacts ATP. Position 116 is a phosphoserine; by PKA and PKD (S116). Residue T144 is modified to Phosphothreonine; by PKA; in vitro. Residues 153 to 185 (TGKTCLLKAMLNLHNGQNDTIALLLDVARKTDS) form an ANK 2 repeat. Residues K155, K160, N164, 199–202 (YKGQ), and 210–211 (ER) each bind ATP. 4 ANK repeats span residues 203-228 (TALH…ADVQ), 249-276 (ELPL…QPAD), 285-321 (NTVL…KLHP), and 335-358 (TPLA…REIH). T370 carries the phosphothreonine; by PKA; in vitro modification. The ANK 7 repeat unit spans residues 393–415 (NSVLEVIAYSSSETPNRHDMLLV). Residues 433-453 (IFYFNFFVYCLYMIIFTAAAY) form a helical membrane-spanning segment. The Extracellular portion of the chain corresponds to 454 to 471 (YRPVEGLPPYKLKNTVGD). Residues 472 to 497 (YFRVTGEILSVSGGVYFFFRGIQYFL) traverse the membrane as a helical segment. The Cytoplasmic portion of the chain corresponds to 498 to 510 (QRRPSLKSLFVDS). Phosphoserine; by PKC/PRKCE is present on S502. 511–512 (YS) contributes to the resiniferatoxin binding site. A helical transmembrane segment spans residues 511–531 (YSEILFFVQSLFMLVSVVLYF). Residues 532–535 (SQRK) lie on the Extracellular side of the membrane. Residues 536 to 556 (EYVASMVFSLAMGWTNMLYYT) form a helical membrane-spanning segment. T550 and R557 together coordinate resiniferatoxin. At 557 to 571 (RGFQQMGIYAVMIEK) the chain is on the cytoplasmic side. The chain crosses the membrane as a helical span at residues 572-599 (MILRDLCRFMFVYLVFLFGFSTAVVTLI). Topologically, residues 600–626 (EDGKNNSLPMESTPHKCRGSACKPGNS) are extracellular. The N-linked (GlcNAc...) asparagine glycan is linked to N604. The segment at residues 627-649 (YNSLYSTCLELFKFTIGMGDLEF) is an intramembrane region (pore-forming). Position 643 (G643) interacts with Na(+). The Selectivity filter signature appears at 643–646 (GMGD). D646 serves as a coordination point for Ca(2+). The Extracellular segment spans residues 650–657 (TENYDFKA). The chain crosses the membrane as a helical span at residues 658–686 (VFIILLLAYVILTYILLLNMLIALMGETV). The AD stretch occupies residues 684-712 (ETVNKIAQESKNIWKLQRAITILDTEKSF). The Cytoplasmic segment spans residues 687–838 (NKIAQESKNI…FKDSMVPGEK (152 aa)). A Phosphothreonine modification is found at T704. The tract at residues 767-801 (EGVKRTLSFSLRSGRVSGRNWKNFALVPLLRDAST) is interaction with calmodulin. S774 is modified (phosphoserine; by PKA; in vitro). The tract at residues 777–792 (LRSGRVSGRNWKNFAL) is required for PIP2-mediated channel inhibition. At S800 the chain carries Phosphoserine; by PKC/PRKCE and PKC/PRKCZ. Position 820 is a phosphoserine; by PKA; in vitro (S820).

The protein belongs to the transient receptor (TC 1.A.4) family. TrpV subfamily. TRPV1 sub-subfamily. In terms of assembly, homotetramer. Interacts with PIRT. May also form a heteromeric channel with TRPV3. Interacts with CALM, PRKCM and CSK. Interacts with PRKCG and NTRK1, probably by forming a trimeric complex. Interacts with the Scolopendra mutilans RhTx toxin. Interacts with the spider Tau-theraphotoxin-Hs1a. Interacts with TMEM100. Interacts with PACS2. In terms of processing, phosphorylation by PKA reverses capsaicin-induced dephosphorylation at multiple sites, probably including Ser-116 as a major phosphorylation site. Phosphorylation by CAMKII seems to regulate binding to vanilloids. Phosphorylated and modulated by PRKCE, PRKCM and probably PRKCZ. Dephosphorylation by calcineurin seems to lead to receptor desensitization and phosphorylation by CAMKII recovers activity. As to expression, predominantly expressed in trigeminal and dorsal root sensory ganglia. Expressed also in hippocampus, cortex, cerebellum, olfactory bulb, mesencephalon and hindbrain. High expression in the cell bodies and dendrites of neurons in the hippocampus and in the cortex. In the brain detected also in astrocytes and pericytes (at protein level). Isoform 1 and isoform 3 are expressed in brain and peripheral blood mononuclear cells.

Its subcellular location is the postsynaptic cell membrane. It is found in the cell projection. It localises to the dendritic spine membrane. The protein localises to the cell membrane. The enzyme catalyses Ca(2+)(in) = Ca(2+)(out). It carries out the reaction Mg(2+)(in) = Mg(2+)(out). It catalyses the reaction Na(+)(in) = Na(+)(out). The catalysed reaction is K(+)(in) = K(+)(out). Its activity is regulated as follows. Channel activity is activated via the interaction with PIRT and phosphatidylinositol 4,5-bisphosphate (PIP2). Both PIRT and PIP2 are required to activate channel activity. The channel is sensitized by ATP binding. Repeated stimulation with capsaicin gives rise to progressively smaller responses, due to desensitization. This desensitization is triggered by the influx of calcium ions and is inhibited by elevated ATP levels. Ca(2+) and CALM displace ATP from its binding site and trigger a conformation change that leads to a closed, desensitized channel. Intracellular PIP2 inhibits desensitization. The double-knot toxin (DkTx) from the Chinese earth tiger tarantula activates the channel and traps it in an open conformation. The Scolopendra mutilans RhTx toxin potentiates the heat activation pathway mediated by this channel by binding to the charge-rich outer pore region (in an activated state). Non-selective calcium permeant cation channel involved in detection of noxious chemical and thermal stimuli. Seems to mediate proton influx and may be involved in intracellular acidosis in nociceptive neurons. Involved in mediation of inflammatory pain and hyperalgesia. Sensitized by a phosphatidylinositol second messenger system activated by receptor tyrosine kinases, which involves PKC isozymes and PCL. Activation by vanilloids, like capsaicin, and temperatures higher than 42 degrees Celsius. Upon activation, exhibits a time- and Ca(2+)-dependent outward rectification, followed by a long-lasting refractory state. Mild extracellular acidic pH (6.5) potentiates channel activation by noxious heat and vanilloids, whereas acidic conditions (pH &lt;6) directly activate the channel. Can be activated by endogenous compounds, including 12-hydroperoxytetraenoic acid and bradykinin. Acts as ionotropic endocannabinoid receptor with central neuromodulatory effects. Triggers a form of long-term depression (TRPV1-LTD) mediated by the endocannabinoid anandamine in the hippocampus and nucleus accumbens by affecting AMPA receptors endocytosis. Its function is as follows. Does not display channel activity in response to noxious chemical compounds, such as capsaicin and the vanilloid resiniferatoxin. Channel activity is not elicited by mildly acidic extracellular pH, and only slight channel activity is observed in response to noxiuos heat stimuli. This Rattus norvegicus (Rat) protein is Transient receptor potential cation channel subfamily V member 1 (Trpv1).